Here is a 159-residue protein sequence, read N- to C-terminus: Protein-export protein SecB (159 aa).

Belongs to the SecB family. In terms of assembly, homotetramer, a dimer of dimers. One homotetramer interacts with 1 SecA dimer.

The protein resides in the cytoplasm. In terms of biological role, one of the proteins required for the normal export of preproteins out of the cell cytoplasm. It is a molecular chaperone that binds to a subset of precursor proteins, maintaining them in a translocation-competent state. It also specifically binds to its receptor SecA. This chain is Protein-export protein SecB, found in Burkholderia mallei (strain NCTC 10229).